Here is a 943-residue protein sequence, read N- to C-terminus: Isoleucine--tRNA ligase (943 aa).

The 'HIGH' region signature appears at 59–69 (PYANGQIHLGH). E577 serves as a coordination point for L-isoleucyl-5'-AMP. Residues 618 to 622 (KMSKS) carry the 'KMSKS' region motif. K621 is an ATP binding site. Zn(2+) contacts are provided by C906, C909, C926, and C929.

Belongs to the class-I aminoacyl-tRNA synthetase family. IleS type 1 subfamily. As to quaternary structure, monomer. The cofactor is Zn(2+).

It is found in the cytoplasm. It catalyses the reaction tRNA(Ile) + L-isoleucine + ATP = L-isoleucyl-tRNA(Ile) + AMP + diphosphate. Its function is as follows. Catalyzes the attachment of isoleucine to tRNA(Ile). As IleRS can inadvertently accommodate and process structurally similar amino acids such as valine, to avoid such errors it has two additional distinct tRNA(Ile)-dependent editing activities. One activity is designated as 'pretransfer' editing and involves the hydrolysis of activated Val-AMP. The other activity is designated 'posttransfer' editing and involves deacylation of mischarged Val-tRNA(Ile). The chain is Isoleucine--tRNA ligase from Xylella fastidiosa (strain M12).